Consider the following 356-residue polypeptide: 3-dehydroquinate synthase (356 aa).

Residues 106-110 (GVVGD), 130-131 (TT), K143, and K152 contribute to the NAD(+) site. Residues E185, H248, and H265 each contribute to the Zn(2+) site.

The protein belongs to the sugar phosphate cyclases superfamily. Dehydroquinate synthase family. It depends on NAD(+) as a cofactor. Requires Co(2+) as cofactor. Zn(2+) is required as a cofactor.

The protein resides in the cytoplasm. The enzyme catalyses 7-phospho-2-dehydro-3-deoxy-D-arabino-heptonate = 3-dehydroquinate + phosphate. It functions in the pathway metabolic intermediate biosynthesis; chorismate biosynthesis; chorismate from D-erythrose 4-phosphate and phosphoenolpyruvate: step 2/7. Its function is as follows. Catalyzes the conversion of 3-deoxy-D-arabino-heptulosonate 7-phosphate (DAHP) to dehydroquinate (DHQ). In Caldanaerobacter subterraneus subsp. tengcongensis (strain DSM 15242 / JCM 11007 / NBRC 100824 / MB4) (Thermoanaerobacter tengcongensis), this protein is 3-dehydroquinate synthase.